The chain runs to 89 residues: Signal recognition particle 19 kDa protein (89 aa).

The protein belongs to the SRP19 family. As to quaternary structure, part of the signal recognition particle protein translocation system, which is composed of SRP and FtsY. Archaeal SRP consists of a 7S RNA molecule of 300 nucleotides and two protein subunits: SRP54 and SRP19.

Its subcellular location is the cytoplasm. Functionally, involved in targeting and insertion of nascent membrane proteins into the cytoplasmic membrane. Binds directly to 7S RNA and mediates binding of the 54 kDa subunit of the SRP. The sequence is that of Signal recognition particle 19 kDa protein from Methanobrevibacter smithii (strain ATCC 35061 / DSM 861 / OCM 144 / PS).